Reading from the N-terminus, the 508-residue chain is Protein MGF 505-9R (508 aa).

ANK repeat units lie at residues 54–83 (SINL…NLHY), 253–282 (QVDT…RKTV), and 313–343 (IIKK…KINL).

This sequence belongs to the asfivirus MGF 505 family.

Plays a role in virus cell tropism, and may be required for efficient virus replication in macrophages. This Ornithodoros (relapsing fever ticks) protein is Protein MGF 505-9R.